Reading from the N-terminus, the 260-residue chain is MNSSSAVSKRLEGKVAIVTGGASGIGASTVSLFHDHGAKVVIADIQDNLGQTLAGRLGRNISYIHCDVTDENQVRALVDATVAKHGGVDIMFSNAGIVEGPTVSIFDADKGALERLLGINLVGGFLAAKHAARVMSPTKKGCIIFTASACTEVAGISGPGYVASKYGIVGLMKSLAAELGSHGIRANCVSPFGVLTGIAAGDDKTKLMFEGLMSKVGNLKGKILTADDVAKAALYLASDEASYVSGVNLVLDGGYSVVNP.

Residues 20–26, D44, 67–68, and 94–96 each bind NAD(+); these read GGASGIG, DV, and NAG. S148 functions as the Proton donor in the catalytic mechanism. Residues Y161, K165, and T196 each coordinate NAD(+). Y161 functions as the Proton acceptor in the catalytic mechanism. K165 acts as the Proton donor/acceptor in catalysis.

This sequence belongs to the short-chain dehydrogenases/reductases (SDR) family.

The enzyme catalyses (1R,2S,4R)-borneol + NAD(+) = (1R,4R)-camphor + NADH + H(+). In terms of biological role, involved in the biosynthesis of monoterpene natural products related to camphor. Catalayzes the oxidation of (+)-borneol to (+)-camphor. Shows absolute selectivity towards (+)-borneol. Catalyzes the oxidation of (+)-isoborneol to (-)-camphor. Shows absolute selectivity towards (+)-isoborneol. This chain is (+)-borneol dehydrogenase 1, found in Salvia officinalis (Sage).